Consider the following 261-residue polypeptide: MAVQAVHIQGDAFLVCVTHSLSTEREEVMGLCIGEVDTQKVVHIHSVIILRRSDKRKDRVEISPEQLSAATTEADRLAEITGRPMRVVGWYHSHPHITVWPSHVDVRTQAMYQMMDVGFVGLIFSCFIEDKNTKTGRILYTCFQSVQAQKSSEYERIEVPLHVVPHNTIRKVCLESAVELPRILCQEEQDAYRRIHSLGHLDSITKIHNGSVFTKNLCGQMSAISGPLLQWLEDRLEQNQQRAQELQSEKEQLLQELKALG.

The region spanning 6–149 is the MPN domain; the sequence is VHIQGDAFLV…YTCFQSVQAQ (144 aa). Positions 92, 94, and 105 each coordinate Zn(2+). A JAMM motif motif is present at residues 92–105; the sequence is HSHPHITVWPSHVD.

The protein belongs to the peptidase M67A family. BRCC36 subfamily. As to quaternary structure, component of the BRCA1-A complex, at least composed of brca1, bard1, uimc1/rap80, abraxas1, brcc3/brcc36, babam2 and babam1/nba1. In the BRCA1-A complex, interacts directly with abraxas1 and babam2. Component of the BRISC complex, at least composed of abraxas2, brcc3/brcc36, babam2 and babam1/nba1. Within the complex, interacts directly with abraxas2. Both the BRCA1-A complex and the BRISC complex bind polyubiquitin. Zn(2+) is required as a cofactor.

The protein localises to the nucleus. It is found in the cytoplasm. Its subcellular location is the cytoskeleton. The protein resides in the spindle pole. Its function is as follows. Metalloprotease that specifically cleaves 'Lys-63'-linked polyubiquitin chains. Does not have activity toward 'Lys-48'-linked polyubiquitin chains. Component of the BRCA1-A complex, a complex that specifically recognizes 'Lys-63'-linked ubiquitinated histones H2A and H2AX at DNA lesions sites, leading to target the brca1-bard1 heterodimer to sites of DNA damage at double-strand breaks (DSBs). In the BRCA1-A complex, it specifically removes 'Lys-63'-linked ubiquitin on histones H2A and H2AX, antagonizing the rnf8-dependent ubiquitination at double-strand breaks (DSBs). Catalytic subunit of the BRISC complex, a multiprotein complex that specifically cleaves 'Lys-63'-linked ubiquitin in various substrates. Mediates the specific 'Lys-63'-specific deubiquitination associated with the COP9 signalosome complex (CSN), via the interaction of the BRISC complex with the CSN complex. The BRISC complex is required for normal mitotic spindle assembly and microtubule attachment to kinetochores via its role in deubiquitinating numa1. Plays a role in interferon signaling via its role in the deubiquitination of the interferon receptor ifnar1; deubiquitination increases ifnar1 activity by enhancing its stability and cell surface expression. Acts as a regulator of the NLRP3 inflammasome by mediating deubiquitination of nlrp3. Down-regulates the response to bacterial lipopolysaccharide (LPS) via its role in ifnar1 deubiquitination. The protein is Lys-63-specific deubiquitinase BRCC36 (brcc3) of Xenopus tropicalis (Western clawed frog).